The following is a 243-amino-acid chain: Thaumatin-like protein 1 (243 aa).

Residues 1–22 (MMKTLALYGLTLALFFLSGAHS) form the signal peptide. Cystine bridges form between cysteine 31-cysteine 242, cysteine 79-cysteine 88, cysteine 93-cysteine 100, cysteine 148-cysteine 231, cysteine 153-cysteine 214, cysteine 161-cysteine 177, cysteine 181-cysteine 190, and cysteine 191-cysteine 201.

The protein belongs to the thaumatin family.

The protein resides in the secreted. The protein localises to the extracellular space. It localises to the apoplast. Functionally, possesses antifungal activity. The sequence is that of Thaumatin-like protein 1 (TL1) from Castanea sativa (Sweet chestnut).